The following is a 252-amino-acid chain: Tricin synthase 1 (252 aa).

S-adenosyl-L-methionine contacts are provided by residues serine 65, glutamate 87, glycine 89 to valine 90, serine 95, and aspartate 113. Aspartate 168 is an a divalent metal cation binding site. Aspartate 170 provides a ligand contact to S-adenosyl-L-methionine. 2 residues coordinate a divalent metal cation: aspartate 194 and asparagine 195.

It belongs to the class I-like SAM-binding methyltransferase superfamily. Cation-dependent O-methyltransferase family. CCoAMT subfamily. Mg(2+) serves as cofactor. The cofactor is Mn(2+). Requires Co(2+) as cofactor. Ubiquitous. Highest expression in stems and roots.

Its subcellular location is the nucleus. It carries out the reaction tricetin + 2 S-adenosyl-L-methionine = 3',5'-di-O-methyltricetin + 2 S-adenosyl-L-homocysteine + 2 H(+). Its function is as follows. Catalyzes the stepwise methylation of tricetin to its 3'-mono- and 3',5'-dimethyl ethers. No 3',4',5'-trimethylated ester derivatives are produced. Can use caffeoyl-CoA, 5-hydroxyferulic acid, luteolin, tricetin, quercetin, myrcetin and 7,8-dihydroxyflavone as substrates, but not naringenin, apigenin or kaempferol. The 2,3-double bond and the O-dihydroxyl group of the substrate are both required for catalytic activity of the enzyme. This chain is Tricin synthase 1 (ROMT-15), found in Oryza sativa subsp. japonica (Rice).